Consider the following 416-residue polypeptide: Tyrosine aminotransferase (416 aa).

Lys253 carries the N6-(pyridoxal phosphate)lysine modification.

This sequence belongs to the class-I pyridoxal-phosphate-dependent aminotransferase family. Homodimer. Pyridoxal 5'-phosphate serves as cofactor. The N-terminus is blocked.

It is found in the cytoplasm. Its subcellular location is the mitochondrion. It catalyses the reaction L-tyrosine + 2-oxoglutarate = 3-(4-hydroxyphenyl)pyruvate + L-glutamate. Its pathway is amino-acid degradation; L-phenylalanine degradation; acetoacetate and fumarate from L-phenylalanine: step 2/6. Its function is as follows. Transaminase involved in tyrosine breakdown. Converts tyrosine to p-hydroxyphenylpyruvate. This chain is Tyrosine aminotransferase, found in Trypanosoma cruzi.